We begin with the raw amino-acid sequence, 563 residues long: Arginine--tRNA ligase (563 aa).

The 'HIGH' region motif lies at 121–131 (PNIAKPFSIGH).

It belongs to the class-I aminoacyl-tRNA synthetase family. In terms of assembly, monomer.

The protein resides in the cytoplasm. The catalysed reaction is tRNA(Arg) + L-arginine + ATP = L-arginyl-tRNA(Arg) + AMP + diphosphate. The protein is Arginine--tRNA ligase of Streptococcus pyogenes serotype M3 (strain ATCC BAA-595 / MGAS315).